A 266-amino-acid polypeptide reads, in one-letter code: Proline-rich protein 23A (266 aa).

Residues 1 to 18 are compositionally biased toward low complexity; it reads MGSRPRSPSAFPAPWWGQ. 2 disordered regions span residues 1–47 and 197–266; these read MGSR…SLED and EPCA…LFQE. Positions 227–238 are enriched in pro residues; sequence PSSPLQPLPPSP. The span at 255–266 shows a compositional bias: basic residues; the sequence is PPCKARRRLFQE.

The protein belongs to the PRR23 family.

The polypeptide is Proline-rich protein 23A (PRR23A) (Homo sapiens (Human)).